The primary structure comprises 782 residues: Potassium transporter 6 (782 aa).

At 1–18 (MEIESGSYQNAKKESWRT) the chain is on the cytoplasmic side. Residues 19-39 (VLTLAYQSLGVVYGDLSISPL) traverse the membrane as a helical segment. Residues 40–61 (YVYKSTFAEDIHHSESNEEIFG) are Extracellular-facing. The chain crosses the membrane as a helical span at residues 62–82 (VLSFIFWTITLVPLLKYVFIV). Residues 83–153 (LRADDNGEGG…TLEKHGVLQK (71 aa)) lie on the Cytoplasmic side of the membrane. Residues 154-174 (ILLVLALIGTCMVIGDGVLTP) traverse the membrane as a helical segment. Topologically, residues 175–195 (AISVFSAVSGVELSMSKEHHK) are extracellular. The chain crosses the membrane as a helical span at residues 196 to 216 (YIELPAACVILIGLFALQHYG). Over 217–219 (THR) the chain is Cytoplasmic. A helical membrane pass occupies residues 220–240 (VGFLFAPVILLWLMCISAIGV). The Extracellular segment spans residues 241–270 (YNIFHWNPHVYQALSPYYMYKFLKKTQSRG). A helical transmembrane segment spans residues 271-291 (WMSLGGILLCITGSEAMFADL). The Cytoplasmic segment spans residues 292–296 (GHFSQ). Residues 297–317 (LSIKIAFTSLVYPSLILAYMG) traverse the membrane as a helical segment. Over 318 to 347 (QAAYLSQHHIIESEYNIGFYVSVPERLRWP) the chain is Extracellular. The helical transmembrane segment at 348–368 (VLVIAILAAVVGSQAIITGTF) threads the bilayer. The Cytoplasmic segment spans residues 369 to 395 (SIIKQCSALGCFPKVKIVHTSSKIHGQ). The chain crosses the membrane as a helical span at residues 396–416 (IYIPEINWILMVLCLAVTIGF). Residues 417-421 (RDTKR) lie on the Extracellular side of the membrane. 2 consecutive transmembrane segments (helical) span residues 422 to 442 (LGNASGLAVITVMLVTTCLMS) and 443 to 463 (LVIVLCWHKSVIFAIVFVVFF). The Extracellular segment spans residues 464-474 (GTIESLYFSAS). A helical transmembrane segment spans residues 475–495 (LIKFLEGAWVPIALAFCFLLA). Over 496-782 (MCTWHYGTLK…TLEVGMIYNV (287 aa)) the chain is Cytoplasmic. A compositionally biased stretch (basic and acidic residues) spans 664–675 (YESDIDDPDKPG). The segment at 664–693 (YESDIDDPDKPGTSEIRSPKPKKKSKSKVK) is disordered. A compositionally biased stretch (basic residues) spans 682-693 (PKPKKKSKSKVK).

This sequence belongs to the HAK/KUP transporter (TC 2.A.72.3) family.

It localises to the cell membrane. In terms of biological role, probable potassium transporter. This is Potassium transporter 6 (POT6) from Arabidopsis thaliana (Mouse-ear cress).